The sequence spans 477 residues: Maternal protein exuperantia-2 (477 aa).

Residues 196 to 209 (KDGNSTKEDEHENP) show a composition bias toward basic and acidic residues. Disordered stretches follow at residues 196–226 (KDGNSTKEDEHENPEGNSSITDNSGHKNQKQ) and 384–477 (TIKP…FADI). Residues 385–402 (IKPRCKRSGNGTRRRNRA) show a composition bias toward basic residues.

Its function is as follows. Ensures the proper localization of the mRNA of the bicoid gene to the anterior regions of the oocyte thus playing a fundamental role in the establishment of the polarity of the oocyte. May bind the bcd mRNA. This chain is Maternal protein exuperantia-2 (exu2), found in Drosophila pseudoobscura pseudoobscura (Fruit fly).